The primary structure comprises 384 residues: Mannitol-1-phosphate 5-dehydrogenase (384 aa).

5 to 16 lines the NAD(+) pocket; sequence AVHFGAGNIGRG.

The protein belongs to the mannitol dehydrogenase family.

The catalysed reaction is D-mannitol 1-phosphate + NAD(+) = beta-D-fructose 6-phosphate + NADH + H(+). The protein is Mannitol-1-phosphate 5-dehydrogenase of Vibrio cholerae serotype O1 (strain ATCC 39541 / Classical Ogawa 395 / O395).